We begin with the raw amino-acid sequence, 450 residues long: Phosphoglucosamine mutase (450 aa).

Ser-101 acts as the Phosphoserine intermediate in catalysis. Mg(2+) contacts are provided by Ser-101, Asp-241, Asp-243, and Asp-245. Ser-101 carries the phosphoserine modification.

Belongs to the phosphohexose mutase family. Mg(2+) is required as a cofactor. Activated by phosphorylation.

It carries out the reaction alpha-D-glucosamine 1-phosphate = D-glucosamine 6-phosphate. Catalyzes the conversion of glucosamine-6-phosphate to glucosamine-1-phosphate. This Listeria monocytogenes serotype 4b (strain F2365) protein is Phosphoglucosamine mutase.